Here is a 161-residue protein sequence, read N- to C-terminus: SsrA-binding protein (161 aa).

It belongs to the SmpB family.

It localises to the cytoplasm. Required for rescue of stalled ribosomes mediated by trans-translation. Binds to transfer-messenger RNA (tmRNA), required for stable association of tmRNA with ribosomes. tmRNA and SmpB together mimic tRNA shape, replacing the anticodon stem-loop with SmpB. tmRNA is encoded by the ssrA gene; the 2 termini fold to resemble tRNA(Ala) and it encodes a 'tag peptide', a short internal open reading frame. During trans-translation Ala-aminoacylated tmRNA acts like a tRNA, entering the A-site of stalled ribosomes, displacing the stalled mRNA. The ribosome then switches to translate the ORF on the tmRNA; the nascent peptide is terminated with the 'tag peptide' encoded by the tmRNA and targeted for degradation. The ribosome is freed to recommence translation, which seems to be the essential function of trans-translation. The sequence is that of SsrA-binding protein from Vesicomyosocius okutanii subsp. Calyptogena okutanii (strain HA).